The sequence spans 390 residues: MRVLLRCCCGHLPVGGGAGRRSNPRWRALARLSASPGWEDGQGARVREKPPWRVLFFGNDQFARETLRALHAARENKEEELIEKLEVVTVPSPSPKGLPVKQYAVQSQLPVYEWPDVGSGEYDVGVVASFGRLLSEAFILKFPYGILNVHPSCLPRWRGPAPIIHTILHGDTIAGVTIMQIKPRRFDVGPILKQETVPVPPKSTSKELEAVLSRLGANMLISVLKNLPESLNNGRQQPAEGVTHAPKISAATSCIKWEEQTSEQIFRLYRAVGNIIPLQTLWMDNTIKLLDLVEVDNSILSDSKLTGQAVIPGSVIYHKQSQILLVCCKDDWIGVRSVMLKKTLTATDFYNGYLHPWYQKNSQAQPSQCRFQTLRLPPKKKQKKKIVAMQ.

The transit peptide at M1–S33 directs the protein to the mitochondrion.

This sequence belongs to the Fmt family.

The protein localises to the mitochondrion. The catalysed reaction is L-methionyl-tRNA(fMet) + (6R)-10-formyltetrahydrofolate = N-formyl-L-methionyl-tRNA(fMet) + (6S)-5,6,7,8-tetrahydrofolate + H(+). Functionally, methionyl-tRNA formyltransferase that formylates methionyl-tRNA in mitochondria and is crucial for translation initiation. This chain is Methionyl-tRNA formyltransferase, mitochondrial (MTFMT), found in Bos taurus (Bovine).